Consider the following 488-residue polypeptide: MGTPVEVSKLHFLLFPFMAHGHMIPTLDMAKLFATKGAKSTILTTPLNAKLFFEKPIKSFNQDNPGLEDITIQILNFPCTELGLPDGCENTDFIFSTPDLNVGDLSQKFLLAMKYFEEPLEELLVTMRPDCLVGNMFFPWSTKVAEKFGVPRLVFHGTGYFSLCASHCIRLPKNVATSSEPFVIPDLPGDILITEEQVMETEEESVMGRFMKAIRDSERDSFGVLVNSFYELEQAYSDYFKSFVAKRAWHIGPLSLGNRKFEEKAERGKKASIDEHECLKWLDSKKCDSVIYMAFGTMSSFKNEQLIEIAAGLDMSGHDFVWVVNRKGSQVEKEDWLPEGFEEKTKGKGLIIRGWAPQVLILEHKAIGGFLTHCGWNSLLEGVAAGLPMVTWPVGAEQFYNEKLVTQVLKTGVSVGVKKMMQVVGDFISREKVEGAVREVMVGEERRKRAKELAEMAKNAVKEGGSSDLEVDRLMEELTLVKLQKEKV.

UDP-alpha-D-glucose contacts are provided by residues Thr297, 356-358, 373-381, and 395-398; these read APQ, HCGWNSLLE, and GAEQ.

This sequence belongs to the UDP-glycosyltransferase family.

Its function is as follows. Possesses low quercetin 3-O-glucosyltransferase and 7-O-glucosyltransferase activities in vitro. This chain is UDP-glycosyltransferase 73B1 (UGT73B1), found in Arabidopsis thaliana (Mouse-ear cress).